The following is a 1019-amino-acid chain: TOG array regulator of axonemal microtubules protein 2 (1019 aa).

Disordered stretches follow at residues 28-54 (AGPR…PEPR), 131-158 (RRLS…PLHS), 249-311 (TPSR…AKKP), and 991-1019 (SLGG…FQLD). Over residues 1007–1019 (SKTTGSSYPFQLD) the composition is skewed to polar residues.

It belongs to the Crescerin family.

This is TOG array regulator of axonemal microtubules protein 2 from Homo sapiens (Human).